Consider the following 294-residue polypeptide: Nitrogenase iron protein (294 aa).

Residue 11–18 coordinates ATP; sequence GKGGIGKS. Residue Cys99 coordinates [4Fe-4S] cluster. Arg102 carries the post-translational modification ADP-ribosylarginine; by dinitrogenase reductase ADP-ribosyltransferase. [4Fe-4S] cluster is bound at residue Cys133.

This sequence belongs to the NifH/BchL/ChlL family. In terms of assembly, homodimer. [4Fe-4S] cluster serves as cofactor. The reversible ADP-ribosylation of Arg-102 inactivates the nitrogenase reductase and regulates nitrogenase activity.

It carries out the reaction N2 + 8 reduced [2Fe-2S]-[ferredoxin] + 16 ATP + 16 H2O = H2 + 8 oxidized [2Fe-2S]-[ferredoxin] + 2 NH4(+) + 16 ADP + 16 phosphate + 6 H(+). Functionally, the key enzymatic reactions in nitrogen fixation are catalyzed by the nitrogenase complex, which has 2 components: the iron protein and the molybdenum-iron protein. In Bradyrhizobium diazoefficiens (strain JCM 10833 / BCRC 13528 / IAM 13628 / NBRC 14792 / USDA 110), this protein is Nitrogenase iron protein (nifH).